We begin with the raw amino-acid sequence, 218 residues long: Cytochrome b6 (218 aa).

Residues 35–55 (IFYCLGGITLVCFLIQFATGF) traverse the membrane as a helical segment. Cys-38 contacts heme c. Heme b is bound by residues His-89 and His-103. The next 3 membrane-spanning stretches (helical) occupy residues 93-113 (ASMM…TGGF), 119-139 (LTWV…VTGY), and 189-209 (LHTF…FLMI). The heme b site is built by His-190 and His-205.

The protein belongs to the cytochrome b family. PetB subfamily. The 4 large subunits of the cytochrome b6-f complex are cytochrome b6, subunit IV (17 kDa polypeptide, PetD), cytochrome f and the Rieske protein, while the 4 small subunits are PetG, PetL, PetM and PetN. The complex functions as a dimer. Requires heme b as cofactor. The cofactor is heme c.

The protein resides in the cellular thylakoid membrane. Functionally, component of the cytochrome b6-f complex, which mediates electron transfer between photosystem II (PSII) and photosystem I (PSI), cyclic electron flow around PSI, and state transitions. The polypeptide is Cytochrome b6 (Synechococcus sp. (strain CC9605)).